Reading from the N-terminus, the 556-residue chain is 5-aminolevulinate synthase, mitochondrial (556 aa).

Residues 1 to 46 (MDSLARQSAKICPFVSRVTSSMQQVQVLHKTNMSAMAQQCPVMRRA) constitute a mitochondrion transit peptide. 3 residues coordinate substrate: arginine 105, serine 218, and lysine 237. Pyridoxal 5'-phosphate is bound by residues serine 270, histidine 298, and threonine 342. Lysine 345 is an active-site residue. Lysine 345 bears the N6-(pyridoxal phosphate)lysine mark. Pyridoxal 5'-phosphate is bound by residues threonine 374 and serine 375. Threonine 460 provides a ligand contact to substrate.

This sequence belongs to the class-II pyridoxal-phosphate-dependent aminotransferase family. As to quaternary structure, homodimer. Requires pyridoxal 5'-phosphate as cofactor.

Its subcellular location is the mitochondrion matrix. It carries out the reaction succinyl-CoA + glycine + H(+) = 5-aminolevulinate + CO2 + CoA. It participates in porphyrin-containing compound metabolism; protoporphyrin-IX biosynthesis; 5-aminolevulinate from glycine: step 1/1. Its function is as follows. Catalyzes the synthesis of 5-aminolevulinate (ALA) from succinyl-CoA and glycine, the first and rate-limiting step in heme biosynthesis. The protein is 5-aminolevulinate synthase, mitochondrial (HEM1) of Eremothecium gossypii (strain ATCC 10895 / CBS 109.51 / FGSC 9923 / NRRL Y-1056) (Yeast).